The following is an 80-amino-acid chain: Small ribosomal subunit protein bS16 (80 aa).

It belongs to the bacterial ribosomal protein bS16 family.

This is Small ribosomal subunit protein bS16 from Hydrogenovibrio crunogenus (strain DSM 25203 / XCL-2) (Thiomicrospira crunogena).